A 359-amino-acid chain; its full sequence is MPDRTPDEVLRQTLAILAPGTDLRDGLERILRGRTGALIVLGFDRVVDSLSTGGFALDVEFSATRLRELAKMDGAIVLDRDVSRIVRAAVQLVPDSSIETSESGTRHRTAERVAKQTGFPVISVSQSMRIVAVYTGNRRYVLEGSDAILGRANQALQTLERYRARLDEVTGTLSALEIEDLVTVRDVCSVVQRIEMVSRIADEISGYVVELGVDGRLLSLQLDELVGGVGPDRELVVRDYLEASRYEGPLEAVLESLAGLHQSDLVDLSQVARVLGFSVGGDSLDSAVSPKGFRLLNRVPRLPGAIVERLVDQFGDLQKLLAASIDDLMTVDGVGEQRARAVREGLSRLAESSILERYV.

Residues 7 to 146 form the DAC domain; the sequence is DEVLRQTLAI…NRRYVLEGSD (140 aa). ATP is bound by residues glycine 74, leucine 92, and 105–109; that span reads TRHRT.

The protein belongs to the DisA family. In terms of assembly, homooctamer. Mg(2+) is required as a cofactor.

It carries out the reaction 2 ATP = 3',3'-c-di-AMP + 2 diphosphate. Functionally, participates in a DNA-damage check-point. DisA forms globular foci that rapidly scan along the chromosomes searching for lesions. Also has diadenylate cyclase activity, catalyzing the condensation of 2 ATP molecules into cyclic di-AMP (c-di-AMP). c-di-AMP likely acts as a signaling molecule that may couple DNA integrity with a cellular process. This Kineococcus radiotolerans (strain ATCC BAA-149 / DSM 14245 / SRS30216) protein is DNA integrity scanning protein DisA.